The chain runs to 160 residues: MNPAERPDTSLCGVRLAIDWGKARIGVAASDRDAILAFPVETVHTADRPVQRLAEIVAEYEPVEVIMGLPVALNGTEQLAAQDVRDAGRQLTEAINPIPVRWVDERMTTRTAARALHEAGRNARKQRGVIDQAAAVAILEHVLEQVRLGQSETATGGADS.

It belongs to the YqgF nuclease family.

Its subcellular location is the cytoplasm. Functionally, could be a nuclease involved in processing of the 5'-end of pre-16S rRNA. The protein is Putative pre-16S rRNA nuclease of Cutibacterium acnes (strain DSM 16379 / KPA171202) (Propionibacterium acnes).